The sequence spans 122 residues: Small ribosomal subunit protein uS13 (122 aa).

Positions 95–122 are disordered; that stretch reads GLPVRGQRTHTNARTRKGPAKSIAGKKK.

This sequence belongs to the universal ribosomal protein uS13 family. As to quaternary structure, part of the 30S ribosomal subunit. Forms a loose heterodimer with protein S19. Forms two bridges to the 50S subunit in the 70S ribosome.

In terms of biological role, located at the top of the head of the 30S subunit, it contacts several helices of the 16S rRNA. In the 70S ribosome it contacts the 23S rRNA (bridge B1a) and protein L5 of the 50S subunit (bridge B1b), connecting the 2 subunits; these bridges are implicated in subunit movement. Contacts the tRNAs in the A and P-sites. The chain is Small ribosomal subunit protein uS13 from Nitrobacter hamburgensis (strain DSM 10229 / NCIMB 13809 / X14).